Reading from the N-terminus, the 140-residue chain is Sec-independent protein translocase protein TatB (140 aa).

Residues 2–22 (LPGIGFSELLLIGLAALIIIG) form a helical membrane-spanning segment. The segment at 90–140 (VNSAVMREHPVSPPPPATPPAPPAELPPEAAPHADSQNAPPEADPAKGDRT) is disordered. Residues 100–119 (VSPPPPATPPAPPAELPPEA) are compositionally biased toward pro residues.

This sequence belongs to the TatB family. In terms of assembly, the Tat system comprises two distinct complexes: a TatABC complex, containing multiple copies of TatA, TatB and TatC subunits, and a separate TatA complex, containing only TatA subunits. Substrates initially bind to the TatABC complex, which probably triggers association of the separate TatA complex to form the active translocon.

Its subcellular location is the cell inner membrane. In terms of biological role, part of the twin-arginine translocation (Tat) system that transports large folded proteins containing a characteristic twin-arginine motif in their signal peptide across membranes. Together with TatC, TatB is part of a receptor directly interacting with Tat signal peptides. TatB may form an oligomeric binding site that transiently accommodates folded Tat precursor proteins before their translocation. The protein is Sec-independent protein translocase protein TatB of Hyphomonas neptunium (strain ATCC 15444).